Here is a 152-residue protein sequence, read N- to C-terminus: Transcriptional repressor NrdR (152 aa).

Residues 3 to 34 (CPFCNHGELKVIDSRNSPEANAIKRRRECLRC) fold into a zinc finger. The region spanning 48-138 (IQVLKRDGRY…VYRRFRDVGE (91 aa)) is the ATP-cone domain.

The protein belongs to the NrdR family. It depends on Zn(2+) as a cofactor.

Negatively regulates transcription of bacterial ribonucleotide reductase nrd genes and operons by binding to NrdR-boxes. The chain is Transcriptional repressor NrdR from Chlamydia muridarum (strain MoPn / Nigg).